Reading from the N-terminus, the 372-residue chain is Cytochrome b (372 aa).

4 consecutive transmembrane segments (helical) span residues 25–45, 69–90, 105–125, and 170–190; these read FGSMLLTCLALQISTGFFLAI, WTMQNLHAIGASMFFICIYIHI, WLSGTVLLITLMATAFFGYVL, and FFALHFILPFLIVSLSSIHII. Histidine 75 and histidine 89 together coordinate heme b. Positions 174 and 188 each coordinate heme b. Histidine 193 lines the a ubiquinone pocket. Helical transmembrane passes span 218–238, 280–300, 312–332, and 339–358; these read YKDILMITVMITTLFSIMAFA, LGGTLALLMSVIILTTAPFTH, LAQMLFWTLIATFITITWTAT, and FILISQMASIIYFSFFIINP.

It belongs to the cytochrome b family. As to quaternary structure, the cytochrome bc1 complex contains 3 respiratory subunits (MT-CYB, CYC1 and UQCRFS1), 2 core proteins (UQCRC1 and UQCRC2) and probably 6 low-molecular weight proteins. It depends on heme b as a cofactor.

It localises to the mitochondrion inner membrane. Its function is as follows. Component of the ubiquinol-cytochrome c reductase complex (complex III or cytochrome b-c1 complex) that is part of the mitochondrial respiratory chain. The b-c1 complex mediates electron transfer from ubiquinol to cytochrome c. Contributes to the generation of a proton gradient across the mitochondrial membrane that is then used for ATP synthesis. The polypeptide is Cytochrome b (MT-CYB) (Acanthophis antarcticus (Common death adder)).